The sequence spans 540 residues: Tyrosine-protein kinase transforming protein erbB (540 aa).

Residues 132–399 enclose the Protein kinase domain; the sequence is FKKVKVLGFG…KMARDPPRYL (268 aa). ATP is bound by residues 138 to 146 and Lys-165; that span reads LGFGAFGTV. Asp-257 serves as the catalytic Proton acceptor.

Belongs to the protein kinase superfamily. Tyr protein kinase family. EGF receptor subfamily.

The catalysed reaction is L-tyrosyl-[protein] + ATP = O-phospho-L-tyrosyl-[protein] + ADP + H(+). The chain is Tyrosine-protein kinase transforming protein erbB (V-ERBB) from Avian erythroblastosis virus (strain ts167).